The chain runs to 342 residues: Platelet-activating factor receptor (342 aa).

Residues M1–T16 lie on the Extracellular side of the membrane. The chain crosses the membrane as a helical span at residues L17–W38. Topologically, residues V39 to I54 are cytoplasmic. Residues F55–I74 form a helical membrane-spanning segment. The Extracellular segment spans residues V75 to N91. An intrachain disulfide couples C90 to C173. A helical membrane pass occupies residues V92–Y113. Over N114–R133 the chain is Cytoplasmic. Residues G134–L155 form a helical membrane-spanning segment. Topologically, residues D156–V184 are extracellular. N-linked (GlcNAc...) asparagine glycosylation occurs at N169. Residues L185–C205 form a helical membrane-spanning segment. Residues N206–M233 are Cytoplasmic-facing. Residues V234–P254 form a helical membrane-spanning segment. The Extracellular segment spans residues W255–Q276. A helical transmembrane segment spans residues V277–L296. Residues T297 to N342 lie on the Cytoplasmic side of the membrane.

Belongs to the G-protein coupled receptor 1 family. As to quaternary structure, interacts with ARRB1. Expressed in the placenta, lung, left and right heart ventricles, heart atrium, leukocytes and differentiated HL-60 granulocytes.

The protein localises to the cell membrane. In terms of biological role, receptor for platelet activating factor, a chemotactic phospholipid mediator that possesses potent inflammatory, smooth-muscle contractile and hypotensive activity. Seems to mediate its action via a G protein that activates a phosphatidylinositol-calcium second messenger system. In Homo sapiens (Human), this protein is Platelet-activating factor receptor (PTAFR).